The primary structure comprises 361 residues: Chorismate synthase (361 aa).

NADP(+) contacts are provided by Arg-48 and Arg-54. FMN is bound by residues 125 to 127 (RSS), 238 to 239 (NA), Gly-278, 293 to 297 (KPTSS), and Arg-319.

Belongs to the chorismate synthase family. In terms of assembly, homotetramer. The cofactor is FMNH2.

The catalysed reaction is 5-O-(1-carboxyvinyl)-3-phosphoshikimate = chorismate + phosphate. It functions in the pathway metabolic intermediate biosynthesis; chorismate biosynthesis; chorismate from D-erythrose 4-phosphate and phosphoenolpyruvate: step 7/7. In terms of biological role, catalyzes the anti-1,4-elimination of the C-3 phosphate and the C-6 proR hydrogen from 5-enolpyruvylshikimate-3-phosphate (EPSP) to yield chorismate, which is the branch point compound that serves as the starting substrate for the three terminal pathways of aromatic amino acid biosynthesis. This reaction introduces a second double bond into the aromatic ring system. In Yersinia pseudotuberculosis serotype IB (strain PB1/+), this protein is Chorismate synthase.